The primary structure comprises 188 residues: MDVNIAPLRAWDDFFPGSDRFARPDFRDISKWNNRVVSNLLYYQTNYLVVAAMMISIVGFLSPFNMILGGIVVVLVFTGFVWAAHNKDVLRRMKKRYPTTFVMVVMLASYFLISMFGGVMVFVFGITFPLLLMFIHASLRLRNLKNKLENKMEGIGLKRTPMGIVLDALEQQEEGINRLTDYISKVKE.

An N-acetylmethionine modification is found at Met1. Over 1–35 (MDVNIAPLRAWDDFFPGSDRFARPDFRDISKWNNR) the chain is Cytoplasmic. 2 consecutive transmembrane segments (helical) span residues 36-56 (VVSNLLYYQTNYLVVAAMMIS) and 57-77 (IVGFLSPFNMILGGIVVVLVF). Residues 78 to 93 (TGFVWAAHNKDVLRRM) lie on the Cytoplasmic side of the membrane. A run of 2 helical transmembrane segments spans residues 94–114 (KKRYPTTFVMVVMLASYFLIS) and 115–135 (MFGGVMVFVFGITFPLLLMFI). Positions 103–117 (MVVMLASYFLISMFG) are required for homodimer formation and heterodimer formation with ARL6IP1. Over 136-188 (HASLRLRNLKNKLENKMEGIGLKRTPMGIVLDALEQQEEGINRLTDYISKVKE) the chain is Cytoplasmic. The targeting to endoplasmic reticulum membrane stretch occupies residues 136 to 188 (HASLRLRNLKNKLENKMEGIGLKRTPMGIVLDALEQQEEGINRLTDYISKVKE).

The protein belongs to the PRA1 family. In terms of assembly, homodimer. Heterodimer with ARL6IP1. Forms multimers. Interacts with ARL6. Interacts with prenylated RAB1A and RAB3A. Interacts with SLC1A1/EAAC1. Interacts with RTN2 (via first transmembrane domain). Does not interact with VAMP1, VAMP2 or VAMP3.

Its subcellular location is the endoplasmic reticulum membrane. The protein localises to the cell membrane. It is found in the cytoplasm. The protein resides in the cytoskeleton. Regulates intracellular concentrations of taurine and glutamate. Negatively modulates SLC1A1/EAAC1 glutamate transport activity by decreasing its affinity for glutamate in a PKC activity-dependent manner. Plays a role in the retention of SLC1A1/EAAC1 in the endoplasmic reticulum. The polypeptide is PRA1 family protein 3 (ARL6IP5) (Homo sapiens (Human)).